Here is a 348-residue protein sequence, read N- to C-terminus: Erlin-1 (348 aa).

The Cytoplasmic segment spans residues 1 to 7; that stretch reads MNMTQAR. Residues 8-28 form a helical membrane-spanning segment; it reads VLVAAVVGLVAVLLYASIHKI. Over 29–348 the chain is Lumenal; the sequence is EEGHLAVYYR…NVIQNKESTG (320 aa). The N-linked (GlcNAc...) asparagine glycan is linked to Asn-108. Residue Lys-269 is modified to N6-acetyllysine. The interval 325-348 is disordered; sequence SSLPSKEALEPSGENVIQNKESTG. The span at 339–348 shows a compositional bias: polar residues; it reads NVIQNKESTG.

It belongs to the band 7/mec-2 family. As to quaternary structure, forms a heteromeric complex with ERLIN2. In complex with ERLIN2, interacts with RNF170. Interacts with AMFR and SYVN1. Post-translationally, deubiquitinated by USP25; leading to stabilization. Expressed in heart, placenta, liver, kidney, pancreas, prostate, testis, ovary and small intestine.

The protein localises to the endoplasmic reticulum membrane. Functionally, component of the ERLIN1/ERLIN2 complex which mediates the endoplasmic reticulum-associated degradation (ERAD) of inositol 1,4,5-trisphosphate receptors (IP3Rs). Involved in regulation of cellular cholesterol homeostasis by regulation the SREBP signaling pathway. Binds cholesterol and may promote ER retention of the SCAP-SREBF complex. (Microbial infection) Required early in hepatitis C virus (HCV) infection to initiate RNA replication, and later in the infection to support infectious virus production. The polypeptide is Erlin-1 (Homo sapiens (Human)).